The sequence spans 235 residues: Putative cobalt transport protein CbiM 2 (235 aa).

7 consecutive transmembrane segments (helical) span residues 9–29, 41–61, 80–100, 107–127, 135–155, 160–180, and 181–201; these read PAGWCLVWWLIALPFLVMGII, YLPLLGVCGAFIFILSALKLP, FGYCVTAVVGAIVLLFQALLL, TMGANMVSMAIGGPIAGYAVY, INIYVTVFLASAVADIVTYII, LALAYPAQVGGFLASFSAFFS, and IFAITQIPLSIMEGVVLALVF.

Belongs to the CbiM family. In terms of assembly, forms an energy-coupling factor (ECF) transporter complex composed of an ATP-binding protein (A component, CbiO), a transmembrane protein (T component, CbiQ) and 2 possible substrate-capture proteins (S components, CbiM and CbiN) of unknown stoichimetry.

The protein localises to the cell membrane. The protein operates within cofactor biosynthesis; adenosylcobalamin biosynthesis. Its function is as follows. Part of the energy-coupling factor (ECF) transporter complex CbiMNOQ involved in cobalt import. This chain is Putative cobalt transport protein CbiM 2, found in Methanosphaerula palustris (strain ATCC BAA-1556 / DSM 19958 / E1-9c).